The following is a 298-amino-acid chain: MFSRAGVAGLSAWTLQPQWIQVRNMATLKDITRRLKSIKNIQKITKSMKMVAAAKYARAERELKPARIYGLGSLALYEKADIKVPEDKKKHLLIGVSSDRGLCGAIHSSIAKQMKSEVATLTAAGKEVMLVGIGDKIRGILYRTHSDQFLVAFKEVGRKPPTFGDASVIALELLNSGYEFDEGSVIFNRFRSVISYKTEEKPIFSLNTIASAESMSIYDDIDADVLQNYQEYNLANIIYYSLKESSTSEQSARMTAMDNASKNASEMIDKLTLTFNRTRQAVITKELIEIISGAAALD.

The N-terminal 25 residues, Met1–Met25, are a transit peptide targeting the mitochondrion. Lys39 is modified (N6-acetyllysine). Lys49 carries the N6-succinyllysine modification. Lys55 carries the N6-acetyllysine modification. Residue Lys115 is modified to N6-acetyllysine; alternate. Residue Lys115 is modified to N6-succinyllysine; alternate. Ser146 is modified (phosphoserine). Lys154 bears the N6-acetyllysine; alternate mark. An N6-succinyllysine; alternate modification is found at Lys154. N6-acetyllysine is present on Lys197. An N6-succinyllysine modification is found at Lys270.

The protein belongs to the ATPase gamma chain family. Component of the ATP synthase complex composed at least of ATP5F1A/subunit alpha, ATP5F1B/subunit beta, ATP5MC1/subunit c (homooctomer), MT-ATP6/subunit a, MT-ATP8/subunit 8, ATP5ME/subunit e, ATP5MF/subunit f, ATP5MG/subunit g, ATP5MK/subunit k, ATP5MJ/subunit j, ATP5F1C/subunit gamma, ATP5F1D/subunit delta, ATP5F1E/subunit epsilon, ATP5PF/subunit F6, ATP5PB/subunit b, ATP5PD/subunit d, ATP5PO/subunit OSCP. ATP synthase complex consists of a soluble F(1) head domain (subunits alpha(3) and beta(3)) - the catalytic core - and a membrane F(0) domain - the membrane proton channel (subunits c, a, 8, e, f, g, k and j). These two domains are linked by a central stalk (subunits gamma, delta, and epsilon) rotating inside the F1 region and a stationary peripheral stalk (subunits F6, b, d, and OSCP). Interacts with FLVCR2; this interaction occurs in the absence of heme and is disrupted upon heme binding.

It localises to the mitochondrion inner membrane. Subunit gamma, of the mitochondrial membrane ATP synthase complex (F(1)F(0) ATP synthase or Complex V) that produces ATP from ADP in the presence of a proton gradient across the membrane which is generated by electron transport complexes of the respiratory chain. ATP synthase complex consist of a soluble F(1) head domain - the catalytic core - and a membrane F(1) domain - the membrane proton channel. These two domains are linked by a central stalk rotating inside the F(1) region and a stationary peripheral stalk. During catalysis, ATP synthesis in the catalytic domain of F(1) is coupled via a rotary mechanism of the central stalk subunits to proton translocation. In vivo, can only synthesize ATP although its ATP hydrolase activity can be activated artificially in vitro. With the central stalk subunit delta, is essential for the biogenesis of F(1) catalytic part of the ATP synthase complex namely in the formation of F1 assembly intermediate. This Macaca fascicularis (Crab-eating macaque) protein is ATP synthase F(1) complex subunit gamma, mitochondrial.